The following is a 597-amino-acid chain: Probable translation initiation factor IF-2 (597 aa).

The 218-residue stretch at Ile4–Leu221 folds into the tr-type G domain. Residues Gly13–Thr20 are G1. Residue Gly13–Thr20 participates in GTP binding. Residues Gly38–His42 are G2. Residues Asp77–Gly80 are G3. GTP contacts are provided by residues Asp77 to His81 and Asn131 to Asp134. Residues Asn131 to Asp134 form a G4 region. A G5 region spans residues Ser199–Lys201.

This sequence belongs to the TRAFAC class translation factor GTPase superfamily. Classic translation factor GTPase family. IF-2 subfamily.

In terms of biological role, function in general translation initiation by promoting the binding of the formylmethionine-tRNA to ribosomes. Seems to function along with eIF-2. The protein is Probable translation initiation factor IF-2 of Thermococcus onnurineus (strain NA1).